Here is a 205-residue protein sequence, read N- to C-terminus: NADH-ubiquinone oxidoreductase chain 6 (205 aa).

Transmembrane regions (helical) follow at residues 48–68 (FFAMIFLVVYIGAIAVLFLFV), 86–106 (YLPVSGIIGLIFWWEMFFILD), and 150–170 (VWFLVSSLILLVAMIGAIVLT).

This sequence belongs to the complex I subunit 6 family. As to quaternary structure, complex I is composed of at least 49 different subunits.

It localises to the mitochondrion membrane. The enzyme catalyses a ubiquinone + NADH + 5 H(+)(in) = a ubiquinol + NAD(+) + 4 H(+)(out). In terms of biological role, core subunit of the mitochondrial membrane respiratory chain NADH dehydrogenase (Complex I) that is believed to belong to the minimal assembly required for catalysis. Complex I functions in the transfer of electrons from NADH to the respiratory chain. The immediate electron acceptor for the enzyme is believed to be ubiquinone. The polypeptide is NADH-ubiquinone oxidoreductase chain 6 (ND6) (Arabidopsis thaliana (Mouse-ear cress)).